The following is a 604-amino-acid chain: Protein hemingway (604 aa).

Disordered stretches follow at residues 1 to 70 (MSGA…GNPH), 103 to 309 (NQLS…PTSQ), 359 to 387 (SDRR…GGGI), and 544 to 585 (TIKA…IDLD). 4 stretches are compositionally biased toward acidic residues: residues 8–38 (SDEE…YIEP), 135–183 (EDEA…DDAQ), 194–214 (DDSD…EDEP), and 288–300 (EEPE…EENQ). Low complexity predominate over residues 368–379 (EMSSMTETTMTS).

Belongs to the CFAP97 family. Detected in ciliated sensory neurons at all stages of development, and in adult testis.

Its subcellular location is the cell projection. The protein localises to the cilium. It is found in the perikaryon. The protein resides in the cytoplasm. Functionally, involved in assembly and/or maintenance of motile cilia. Required during spermatogenesis for axoneme elongation. Necessary for optimal function of the chordotonal (hearing) organs. The protein is Protein hemingway of Drosophila melanogaster (Fruit fly).